The sequence spans 178 residues: Interleukin-10 (178 aa).

A signal peptide spans 1-18 (MPGSALLCCLLLLTGMRI). N29 is a glycosylation site (N-linked (GlcNAc...) asparagine). 2 disulfides stabilise this stretch: C30/C126 and C80/C132. N134 carries an N-linked (GlcNAc...) asparagine glycan.

Belongs to the IL-10 family. Homodimer. Interacts with IL10RA and IL10RB.

The protein localises to the secreted. Major immune regulatory cytokine that acts on many cells of the immune system where it has profound anti-inflammatory functions, limiting excessive tissue disruption caused by inflammation. Mechanistically, IL10 binds to its heterotetrameric receptor comprising IL10RA and IL10RB leading to JAK1 and STAT2-mediated phosphorylation of STAT3. In turn, STAT3 translocates to the nucleus where it drives expression of anti-inflammatory mediators. Targets antigen-presenting cells (APCs) such as macrophages and monocytes and inhibits their release of pro-inflammatory cytokines including granulocyte-macrophage colony-stimulating factor /GM-CSF, granulocyte colony-stimulating factor/G-CSF, IL-1 alpha, IL-1 beta, IL-6, IL-8 and TNF-alpha. Also interferes with antigen presentation by reducing the expression of MHC-class II and co-stimulatory molecules, thereby inhibiting their ability to induce T cell activation. In addition, controls the inflammatory response of macrophages by reprogramming essential metabolic pathways including mTOR signaling. The protein is Interleukin-10 (Il10) of Mus musculus (Mouse).